A 349-amino-acid polypeptide reads, in one-letter code: Inositol 2-dehydrogenase (349 aa).

This sequence belongs to the Gfo/Idh/MocA family. In terms of assembly, homotetramer.

The enzyme catalyses myo-inositol + NAD(+) = scyllo-inosose + NADH + H(+). Involved in the oxidation of myo-inositol (MI) to 2-keto-myo-inositol (2KMI or 2-inosose). The protein is Inositol 2-dehydrogenase of Mycolicibacterium gilvum (strain PYR-GCK) (Mycobacterium gilvum (strain PYR-GCK)).